The primary structure comprises 479 residues: Acyltransferase easC (479 aa).

Residue H161 is the Proton acceptor of the active site.

Belongs to the plant acyltransferase family. Monomer.

It participates in antibiotic biosynthesis. Acyltransferase; part of the gene cluster that mediates the biosynthesis of emericellamides, secondary metabolites acting as antibiotics. The biosynthesis of emericellamides initiates from the highly reducing polyketide synthase easB which catalyzes the formation of the linear polyketide chain. EasB produces several polyketides that can be further processed by the downstream enzymes. The polyketides are released from easB as linear polyketide carboxylic acids, which are converted to CoA thioesters by the acyl-CoA ligase easD. The substrates are then loaded onto the acyltransferase easC, which shuttles them to the first thiolation (T) domain of the nonribosomal peptide synthetase easA. EasA then performs condensation of the polyketides with one glycine, two alanine, one valine and one leucine residues. A last step of cyclization leads to the production of emericellamides. This chain is Acyltransferase easC, found in Emericella nidulans (strain FGSC A4 / ATCC 38163 / CBS 112.46 / NRRL 194 / M139) (Aspergillus nidulans).